Reading from the N-terminus, the 354-residue chain is Uroporphyrinogen decarboxylase (354 aa).

Substrate contacts are provided by residues 27–31 (RQAGR), aspartate 77, tyrosine 154, threonine 209, and histidine 327.

This sequence belongs to the uroporphyrinogen decarboxylase family. Homodimer.

It is found in the cytoplasm. It catalyses the reaction uroporphyrinogen III + 4 H(+) = coproporphyrinogen III + 4 CO2. It functions in the pathway porphyrin-containing compound metabolism; protoporphyrin-IX biosynthesis; coproporphyrinogen-III from 5-aminolevulinate: step 4/4. Catalyzes the decarboxylation of four acetate groups of uroporphyrinogen-III to yield coproporphyrinogen-III. This chain is Uroporphyrinogen decarboxylase, found in Shigella flexneri serotype 5b (strain 8401).